A 193-amino-acid polypeptide reads, in one-letter code: Interferon type A1/A2 (193 aa).

The N-terminal stretch at 1-31 (MAVPASPQHPRGYGILLLTLLLKALATTASA) is a signal peptide. Disulfide bonds link Cys-32–Cys-129, Cys-61–Cys-155, and Cys-68–Cys-168. Residues Asn-65, Asn-71, Asn-108, and Asn-186 are each glycosylated (N-linked (GlcNAc...) asparagine).

It belongs to the alpha/beta interferon family.

The protein resides in the secreted. Has antiviral activities. The sequence is that of Interferon type A1/A2 (IFNA1) from Gallus gallus (Chicken).